The chain runs to 100 residues: Small ribosomal subunit protein uS14c (100 aa).

The protein belongs to the universal ribosomal protein uS14 family. In terms of assembly, part of the 30S ribosomal subunit.

Its subcellular location is the plastid. The protein localises to the chloroplast. Its function is as follows. Binds 16S rRNA, required for the assembly of 30S particles. This is Small ribosomal subunit protein uS14c from Thalassiosira pseudonana (Marine diatom).